We begin with the raw amino-acid sequence, 252 residues long: 3-dehydroquinate dehydratase (252 aa).

3-dehydroquinate contacts are provided by residues S21, 46–48 (EWR), and R82. H143 (proton donor/acceptor) is an active-site residue. Residue K170 is the Schiff-base intermediate with substrate of the active site. Positions 213, 232, and 236 each coordinate 3-dehydroquinate.

This sequence belongs to the type-I 3-dehydroquinase family. As to quaternary structure, homodimer.

The enzyme catalyses 3-dehydroquinate = 3-dehydroshikimate + H2O. The protein operates within metabolic intermediate biosynthesis; chorismate biosynthesis; chorismate from D-erythrose 4-phosphate and phosphoenolpyruvate: step 3/7. Involved in the third step of the chorismate pathway, which leads to the biosynthesis of aromatic amino acids. Catalyzes the cis-dehydration of 3-dehydroquinate (DHQ) and introduces the first double bond of the aromatic ring to yield 3-dehydroshikimate. The chain is 3-dehydroquinate dehydratase from Shigella boydii serotype 4 (strain Sb227).